The chain runs to 349 residues: Anthranilate phosphoribosyltransferase (349 aa).

5-phospho-alpha-D-ribose 1-diphosphate is bound by residues Gly84, 87–88, Thr92, 94–97, 112–120, and Ser124; these read GD, NIST, and KHGNRAASS. Gly84 is an anthranilate binding site. Ser96 is a binding site for Mg(2+). Asn115 lines the anthranilate pocket. Arg170 lines the anthranilate pocket. Mg(2+)-binding residues include Asp228 and Glu229.

Belongs to the anthranilate phosphoribosyltransferase family. Homodimer. Mg(2+) is required as a cofactor.

It carries out the reaction N-(5-phospho-beta-D-ribosyl)anthranilate + diphosphate = 5-phospho-alpha-D-ribose 1-diphosphate + anthranilate. It participates in amino-acid biosynthesis; L-tryptophan biosynthesis; L-tryptophan from chorismate: step 2/5. Its function is as follows. Catalyzes the transfer of the phosphoribosyl group of 5-phosphorylribose-1-pyrophosphate (PRPP) to anthranilate to yield N-(5'-phosphoribosyl)-anthranilate (PRA). This is Anthranilate phosphoribosyltransferase from Leifsonia xyli subsp. xyli (strain CTCB07).